A 1204-amino-acid chain; its full sequence is Exportin-5 (1204 aa).

The necessary for interaction with Ran stretch occupies residues 1–108; it reads MEMEQVNALC…ANGTLRILEE (108 aa). Lys-396 carries the post-translational modification N6-acetyllysine. The tract at residues 533–640 is necessary for interaction with ILF3; the sequence is ELLQLVLNFE…KQLLSNELLL (108 aa). The tract at residues 641 to 642 is pre-siRNA binding; it reads TQ.

The protein belongs to the exportin family. As to quaternary structure, component of a nuclear export receptor complex composed of XPO5, RAN, dsRNA-binding proteins and dsRNA. Found in a nuclear export complex with XPO5, RAN, EEF1A1, and aminoacylated tRNA. Found in a nuclear export complex with XPO5, RAN, ILF3 and dsRNA. Found in a nuclear export complex with XPO5, RAN and pre-miRNA. Found in a nuclear export complex with XPO5, RAN, ILF3 and minihelix VA1 dsRNA. Found in a nuclear export complex with XPO5, RAN, ILF3, ZNF346 and dsRNA. Interacts with EEF1A1, ILF3, NUP153, NUP214 and ZNF346. Interacts with RAN and cargo proteins in a GTP-dependent manner. Interacts with ADAR/ADAR1 (via DRBM domains). Interacts with SMAD4; mediates nuclear export of SMAD4. Interacts with RAN (GTP-bound form).

It localises to the nucleus. Its subcellular location is the cytoplasm. Its function is as follows. Mediates the nuclear export of proteins bearing a double-stranded RNA binding domain (dsRBD) and double-stranded RNAs (cargos). XPO5 in the nucleus binds cooperatively to the RNA and to the GTPase Ran in its active GTP-bound form. Proteins containing dsRBDs can associate with this trimeric complex through the RNA. Docking of this complex to the nuclear pore complex (NPC) is mediated through binding to nucleoporins. Upon transit of a nuclear export complex into the cytoplasm, hydrolysis of Ran-GTP to Ran-GDP (induced by RANBP1 and RANGAP1, respectively) cause disassembly of the complex and release of the cargo from the export receptor. XPO5 then returns to the nuclear compartment by diffusion through the nuclear pore complex, to mediate another round of transport. The directionality of nuclear export is thought to be conferred by an asymmetric distribution of the GTP- and GDP-bound forms of Ran between the cytoplasm and nucleus. Overexpression may in some circumstances enhance RNA-mediated gene silencing (RNAi). Mediates nuclear export of ADAR/ADAR1 in a RanGTP-dependent manner. Mediates the nuclear export of micro-RNA precursors, which form short hairpins. Also mediates the nuclear export of synthetic short hairpin RNAs used for RNA interference. In some circumstances can also mediate the nuclear export of deacylated and aminoacylated tRNAs. Specifically recognizes dsRNAs that lack a 5'-overhang in a sequence-independent manner, have only a short 3'-overhang, and that have a double-stranded length of at least 15 base-pairs. Binding is dependent on Ran-GTP. The sequence is that of Exportin-5 (Xpo5) from Mus musculus (Mouse).